Consider the following 276-residue polypeptide: Sulfur carrier protein FdhD (276 aa).

Cysteine 122 (cysteine persulfide intermediate) is an active-site residue. 259 to 264 (FCRRGR) contributes to the Mo-bis(molybdopterin guanine dinucleotide) binding site.

This sequence belongs to the FdhD family.

The protein resides in the cytoplasm. In terms of biological role, required for formate dehydrogenase (FDH) activity. Acts as a sulfur carrier protein that transfers sulfur from IscS to the molybdenum cofactor prior to its insertion into FDH. In Proteus mirabilis (strain HI4320), this protein is Sulfur carrier protein FdhD.